Here is a 674-residue protein sequence, read N- to C-terminus: CLK4-associating serine/arginine rich protein (674 aa).

A Phosphoserine modification is found at Ser-101. 2 disordered regions span residues 171-232 (TVAE…GMAD) and 258-674 (EKAM…HYRH). Residues 182-214 (PEEEESAAEEESNSDEDEVIPDIDVEVDVDELN) are compositionally biased toward acidic residues. The segment covering 265–283 (RRSRRQRREFREKRLRGRK) has biased composition (basic residues). Ser-285 and Ser-294 each carry phosphoserine. A compositionally biased stretch (basic and acidic residues) spans 290 to 313 (ARRDSPTYDPYKRSPSESSSESRS). Thr-327 carries the post-translational modification Phosphothreonine. Phosphoserine is present on residues Ser-331 and Ser-335. The segment covering 356-365 (PPAPPQPGGP) has biased composition (pro residues). Residues 378–399 (SSSSSSSSASRTSSSRSSSRSS) are compositionally biased toward low complexity. Basic residues-rich tracts occupy residues 411 to 443 (SGRH…RRHS) and 481 to 492 (RGGRGLRHHSSS). Low complexity-rich tracts occupy residues 493-506 (RSRS…SRSR) and 514-532 (HSPS…SQSP). Position 547 is a phosphoserine (Ser-547). Thr-573 carries the post-translational modification Phosphothreonine. Positions 585–647 (ALNRQFKADK…ERQYSRQSRS (63 aa)) form a coiled coil. 2 stretches are compositionally biased toward basic and acidic residues: residues 590-617 (FKAD…ELRA) and 625-641 (KERE…ERQY). Residues 642-651 (SRQSRSPSPR) are compositionally biased toward low complexity. A compositionally biased stretch (basic residues) spans 659 to 674 (SRRRSRSRSRSPHYRH).

Belongs to the splicing factor SR family. Probably interacts with CLK4. Phosphorylated in vitro by CLK4.

It localises to the nucleus. Its function is as follows. Probably functions as an alternative splicing regulator. May regulate the mRNA splicing of genes such as CLK1. May act by regulating members of the CLK kinase family. In Homo sapiens (Human), this protein is CLK4-associating serine/arginine rich protein (CLASRP).